A 292-amino-acid polypeptide reads, in one-letter code: Ribosomal protein L11 methyltransferase (292 aa).

Residues Thr136, Gly159, Asp181, and Asn228 each coordinate S-adenosyl-L-methionine.

The protein belongs to the methyltransferase superfamily. PrmA family.

The protein resides in the cytoplasm. It catalyses the reaction L-lysyl-[protein] + 3 S-adenosyl-L-methionine = N(6),N(6),N(6)-trimethyl-L-lysyl-[protein] + 3 S-adenosyl-L-homocysteine + 3 H(+). Its function is as follows. Methylates ribosomal protein L11. This chain is Ribosomal protein L11 methyltransferase, found in Rhizobium rhizogenes (strain K84 / ATCC BAA-868) (Agrobacterium radiobacter).